Reading from the N-terminus, the 239-residue chain is NADH-quinone oxidoreductase subunit I 1 (239 aa).

4Fe-4S ferredoxin-type domains are found at residues 81–111 (LVPR…IEAA) and 123–152 (AKFV…MDSG). [4Fe-4S] cluster is bound by residues C91, C94, C97, C101, C132, C135, C138, and C142.

This sequence belongs to the complex I 23 kDa subunit family. In terms of assembly, NDH-1 is composed of 14 different subunits. Subunits NuoA, H, J, K, L, M, N constitute the membrane sector of the complex. The cofactor is [4Fe-4S] cluster.

Its subcellular location is the cell inner membrane. It catalyses the reaction a quinone + NADH + 5 H(+)(in) = a quinol + NAD(+) + 4 H(+)(out). NDH-1 shuttles electrons from NADH, via FMN and iron-sulfur (Fe-S) centers, to quinones in the respiratory chain. The immediate electron acceptor for the enzyme in this species is believed to be ubiquinone. Couples the redox reaction to proton translocation (for every two electrons transferred, four hydrogen ions are translocated across the cytoplasmic membrane), and thus conserves the redox energy in a proton gradient. This Anaeromyxobacter dehalogenans (strain 2CP-C) protein is NADH-quinone oxidoreductase subunit I 1.